A 361-amino-acid polypeptide reads, in one-letter code: Phospho-N-acetylmuramoyl-pentapeptide-transferase (361 aa).

Transmembrane regions (helical) follow at residues 28 to 48 (LAAL…IRSL), 73 to 93 (TMGG…WADL), 97 to 117 (YIWL…VDDY), 134 to 154 (FFWQ…TAEL), 168 to 188 (VAIP…IVGS), 200 to 220 (GLAI…AYVA), 237 to 257 (AGEL…FLWF), 264 to 284 (VFMG…ITVI), 289 to 309 (IVLV…MIQV), and 338 to 358 (QVVV…LSTL).

This sequence belongs to the glycosyltransferase 4 family. MraY subfamily. Mg(2+) is required as a cofactor.

It is found in the cell inner membrane. The catalysed reaction is UDP-N-acetyl-alpha-D-muramoyl-L-alanyl-gamma-D-glutamyl-meso-2,6-diaminopimeloyl-D-alanyl-D-alanine + di-trans,octa-cis-undecaprenyl phosphate = di-trans,octa-cis-undecaprenyl diphospho-N-acetyl-alpha-D-muramoyl-L-alanyl-D-glutamyl-meso-2,6-diaminopimeloyl-D-alanyl-D-alanine + UMP. Its pathway is cell wall biogenesis; peptidoglycan biosynthesis. Catalyzes the initial step of the lipid cycle reactions in the biosynthesis of the cell wall peptidoglycan: transfers peptidoglycan precursor phospho-MurNAc-pentapeptide from UDP-MurNAc-pentapeptide onto the lipid carrier undecaprenyl phosphate, yielding undecaprenyl-pyrophosphoryl-MurNAc-pentapeptide, known as lipid I. The polypeptide is Phospho-N-acetylmuramoyl-pentapeptide-transferase (Nitrosomonas eutropha (strain DSM 101675 / C91 / Nm57)).